A 263-amino-acid chain; its full sequence is 3-methyl-2-oxobutanoate hydroxymethyltransferase (263 aa).

The Mg(2+) site is built by Asp45 and Asp84. 3-methyl-2-oxobutanoate is bound by residues 45–46 (DS), Asp84, and Lys112. Glu114 contacts Mg(2+). The Proton acceptor role is filled by Glu180.

This sequence belongs to the PanB family. In terms of assembly, homodecamer; pentamer of dimers. Mg(2+) is required as a cofactor.

It localises to the cytoplasm. It carries out the reaction 3-methyl-2-oxobutanoate + (6R)-5,10-methylene-5,6,7,8-tetrahydrofolate + H2O = 2-dehydropantoate + (6S)-5,6,7,8-tetrahydrofolate. Its pathway is cofactor biosynthesis; (R)-pantothenate biosynthesis; (R)-pantoate from 3-methyl-2-oxobutanoate: step 1/2. In terms of biological role, catalyzes the reversible reaction in which hydroxymethyl group from 5,10-methylenetetrahydrofolate is transferred onto alpha-ketoisovalerate to form ketopantoate. The polypeptide is 3-methyl-2-oxobutanoate hydroxymethyltransferase (Salmonella agona (strain SL483)).